The primary structure comprises 100 residues: Envelope glycoprotein N (100 aa).

An N-terminal signal peptide occupies residues 1–27 (MLSTRFVTLAILACLLVVLGLARGAGG). The Virion surface segment spans residues 28–63 (DPGVKQRIDVAREEERRDFWHAACSGHGFPITTPST). The chain crosses the membrane as a helical span at residues 64 to 84 (AAILFYVSLLAVGVAVACQAY). Residues 85 to 100 (RAVLRIVTLEMLQHLH) lie on the Intravirion side of the membrane.

This sequence belongs to the herpesviridae glycoprotein N family. In terms of assembly, interacts (via N-terminus) with gM (via N-terminus). The gM-gN heterodimer forms the gCII complex.

It is found in the virion membrane. Its subcellular location is the host membrane. The protein localises to the host Golgi apparatus. The protein resides in the host trans-Golgi network. Functionally, envelope glycoprotein necessary for proper maturation of gM and modulation of its membrane fusion activity. Also plays a critical role in virion morphogenesis. This chain is Envelope glycoprotein N, found in Equus caballus (Horse).